The chain runs to 119 residues: Large ribosomal subunit protein uL14 (119 aa).

Belongs to the universal ribosomal protein uL14 family. In terms of assembly, part of the 50S ribosomal subunit. Forms a cluster with proteins L3 and L19. In the 70S ribosome, L14 and L19 interact and together make contacts with the 16S rRNA in bridges B5 and B8.

Functionally, binds to 23S rRNA. Forms part of two intersubunit bridges in the 70S ribosome. The protein is Large ribosomal subunit protein uL14 of Ehrlichia chaffeensis (strain ATCC CRL-10679 / Arkansas).